The chain runs to 131 residues: Spermatocyte protein spe-27 (131 aa).

An N-terminal signal peptide occupies residues 1–17 (MNKSLIFLLSFAYSCYS).

Its function is as follows. Required for spermiogenesis. The polypeptide is Spermatocyte protein spe-27 (spe-27) (Caenorhabditis elegans).